The chain runs to 626 residues: Chaperone protein DnaK (626 aa).

Thr197 is subject to Phosphothreonine; by autocatalysis. 2 stretches are compositionally biased toward basic and acidic residues: residues 512–528 (DAEA…EAVE) and 539–551 (QTEK…GEKI). 2 disordered regions span residues 512–551 (DAEA…GEKI) and 601–626 (DQNA…AEVE).

This sequence belongs to the heat shock protein 70 family.

In terms of biological role, acts as a chaperone. The chain is Chaperone protein DnaK from Campylobacter fetus subsp. fetus (strain 82-40).